Reading from the N-terminus, the 224-residue chain is Cytosolic-abundant heat soluble protein 77580 (224 aa).

Low complexity predominate over residues 1–13; that stretch reads MSNYQQESSYQYS. The disordered stretch occupies residues 1-38; that stretch reads MSNYQQESSYQYSDRSNNGQQQEQQEKKEVEHSSYTHT. Positions 24-38 are enriched in basic and acidic residues; that stretch reads QQEKKEVEHSSYTHT. Residues 83–191 are a coiled coil; it reads VIDTEAETEE…KRVLERSKFH (109 aa). CAHS motif stretches follow at residues 122–140 and 159–177; these read YRKQQEVETEKIRKELEKQ and QKRQIDLEARYAKKELERE. Low complexity predominate over residues 200–215; sequence AAAGSTHSGSSSVAVS. The interval 200-224 is disordered; that stretch reads AAAGSTHSGSSSVAVSESEKFQTNN.

The protein belongs to the Cytosolic-abundant heat soluble protein (CAHS) family.

The protein resides in the cytoplasm. In terms of biological role, CAHS proteins are cytosolic heat soluble proteins that seem to contribute to the anhydrobiosis in tardigrades, but their specific mechanisms are yet to be identified. It is possible that protection during anhydrobiosis might occur via the stabilization of vitrifying small molecules such as sugars, but not via the direct glass transition of CAHS proteins themselves. In Hypsibius exemplaris (Freshwater tardigrade), this protein is Cytosolic-abundant heat soluble protein 77580.